A 271-amino-acid polypeptide reads, in one-letter code: Eukaryotic translation initiation factor 3 subunit G (271 aa).

3 disordered regions span residues methionine 1–aspartate 26, alanine 63–leucine 119, and threonine 147–serine 187. Serine 77 is subject to Phosphoserine. Residues threonine 188–lysine 267 enclose the RRM domain.

The protein belongs to the eIF-3 subunit G family. In terms of assembly, component of the eukaryotic translation initiation factor 3 (eIF-3) complex.

Its subcellular location is the cytoplasm. Its function is as follows. RNA-binding component of the eukaryotic translation initiation factor 3 (eIF-3) complex, which is involved in protein synthesis of a specialized repertoire of mRNAs and, together with other initiation factors, stimulates binding of mRNA and methionyl-tRNAi to the 40S ribosome. The eIF-3 complex specifically targets and initiates translation of a subset of mRNAs involved in cell proliferation. This subunit can bind 18S rRNA. This Scheffersomyces stipitis (strain ATCC 58785 / CBS 6054 / NBRC 10063 / NRRL Y-11545) (Yeast) protein is Eukaryotic translation initiation factor 3 subunit G.